The following is a 449-amino-acid chain: MREIISIHVGQAGTQIGNACWELYCLEHGIQPNGYMNPETASQNSDGGFSTFFSETGQGKYVPRSIYVDLEPNVIDQVRTGPYRDLFHPEQLITGKEDASNNYARGHYTVGKELVDEVTDKIRRIADNCSGLQGFLVFHSFGGGTGSGFGALLLERLAMEYTKKSKLQFSVYPAPQVSTSVVEPYNSVLTTHATLDLADCTFMVDNESCYDICRRNLDIERPSYENLNRLIAQVVSSITASLRFEGSLNVDLAEFQTNLVPYPRIHFPLVTYAPIVSAAKAFHESNSVQEITNQCFEPYNQMVKCDPRAGRYMATCLLYRGDVIPRDVQAAVTTIKAKRTIQFVDWCPTGFKIGICDRPPQHIEGSEIAKVDRAVCMLSNTTSIAEAWSRLDHKFDLMYSKRAFVHWYVGEGMEEGEFSEAREDLAALERDYEEVGQDSMEVDYMEEEY.

Residues Q11, E71, S140, G144, T145, T179, N206, and N228 each coordinate GTP. E71 contacts Mg(2+). E254 is a catalytic residue.

This sequence belongs to the tubulin family. Dimer of alpha and beta chains. A typical microtubule is a hollow water-filled tube with an outer diameter of 25 nm and an inner diameter of 15 nM. Alpha-beta heterodimers associate head-to-tail to form protofilaments running lengthwise along the microtubule wall with the beta-tubulin subunit facing the microtubule plus end conferring a structural polarity. Microtubules usually have 13 protofilaments but different protofilament numbers can be found in some organisms and specialized cells. The cofactor is Mg(2+).

Its subcellular location is the cytoplasm. It is found in the cytoskeleton. It carries out the reaction GTP + H2O = GDP + phosphate + H(+). Its function is as follows. Tubulin is the major constituent of microtubules, a cylinder consisting of laterally associated linear protofilaments composed of alpha- and beta-tubulin heterodimers. Microtubules grow by the addition of GTP-tubulin dimers to the microtubule end, where a stabilizing cap forms. Below the cap, tubulin dimers are in GDP-bound state, owing to GTPase activity of alpha-tubulin. This Schizosaccharomyces pombe (strain 972 / ATCC 24843) (Fission yeast) protein is Tubulin alpha-2 chain (tub1).